Here is a 92-residue protein sequence, read N- to C-terminus: Cell division protein FtsB (92 aa).

Residues 1-3 (MKV) lie on the Cytoplasmic side of the membrane. Residues 4 to 21 (VPILLFVLLAALQYRLWF) traverse the membrane as a helical segment. The Periplasmic segment spans residues 22–92 (GKNSIPEYVA…TFYRILPSEE (71 aa)). A coiled-coil region spans residues 31 to 74 (AMEKSVAEQAEQNTELLQRNNLLKADIQDLKVGLEAVEERARNE).

This sequence belongs to the FtsB family. In terms of assembly, part of a complex composed of FtsB, FtsL and FtsQ.

It is found in the cell inner membrane. Essential cell division protein. May link together the upstream cell division proteins, which are predominantly cytoplasmic, with the downstream cell division proteins, which are predominantly periplasmic. This is Cell division protein FtsB from Pseudoalteromonas atlantica (strain T6c / ATCC BAA-1087).